A 438-amino-acid chain; its full sequence is Adenosylhomocysteinase (438 aa).

Positions 64, 139, and 164 each coordinate substrate. 165 to 167 (TTT) serves as a coordination point for NAD(+). Residues Lys-194 and Asp-198 each contribute to the substrate site. Residues Asn-199, 228-233 (GYGDVG), Glu-251, Asn-286, 307-309 (IGH), and Asn-352 each bind NAD(+).

Belongs to the adenosylhomocysteinase family. Requires NAD(+) as cofactor.

The protein localises to the cytoplasm. The catalysed reaction is S-adenosyl-L-homocysteine + H2O = L-homocysteine + adenosine. Its pathway is amino-acid biosynthesis; L-homocysteine biosynthesis; L-homocysteine from S-adenosyl-L-homocysteine: step 1/1. In terms of biological role, may play a key role in the regulation of the intracellular concentration of adenosylhomocysteine. This is Adenosylhomocysteinase from Coxiella burnetii (strain Dugway 5J108-111).